Consider the following 103-residue polypeptide: Large ribosomal subunit protein bL21 (103 aa).

The protein belongs to the bacterial ribosomal protein bL21 family. Part of the 50S ribosomal subunit. Contacts protein L20.

In terms of biological role, this protein binds to 23S rRNA in the presence of protein L20. This chain is Large ribosomal subunit protein bL21, found in Histophilus somni (strain 129Pt) (Haemophilus somnus).